A 493-amino-acid polypeptide reads, in one-letter code: Glutamyl-tRNA(Gln) amidotransferase subunit A (493 aa).

Active-site charge relay system residues include K78 and S158. Residue S182 is the Acyl-ester intermediate of the active site.

Belongs to the amidase family. GatA subfamily. Heterotrimer of A, B and C subunits.

It catalyses the reaction L-glutamyl-tRNA(Gln) + L-glutamine + ATP + H2O = L-glutaminyl-tRNA(Gln) + L-glutamate + ADP + phosphate + H(+). In terms of biological role, allows the formation of correctly charged Gln-tRNA(Gln) through the transamidation of misacylated Glu-tRNA(Gln) in organisms which lack glutaminyl-tRNA synthetase. The reaction takes place in the presence of glutamine and ATP through an activated gamma-phospho-Glu-tRNA(Gln). This is Glutamyl-tRNA(Gln) amidotransferase subunit A from Rickettsia bellii (strain OSU 85-389).